The following is a 300-amino-acid chain: MKQITIASRESKLALWQTNFIKNRIQSELNIPCEISTMKTQGDIILDQPLNKIGGKALFMKELEVAMLSNKADIAVHSLKDVPYQLPQGFCLAGFMPREDPRDAFVSNKYNSIDDLPKGAVVGTSSLRRKAQLLHYRDDLEIRDLRGNIQTRLSKLDNGDYDAIILASAGLIRLELVERITQFIPVEISLPAVGQGIVVIEALERDNDLLEKIQKLNCRESSRVATAERAFNQELKGGCHVAIGAYAELDNNQITLMAMVASSDGKKILKRKMIGDDPTKLGKLLAQEMIALGAYKILES.

Position 239 is an S-(dipyrrolylmethanemethyl)cysteine (C239).

The protein belongs to the HMBS family. Monomer. Dipyrromethane is required as a cofactor.

The catalysed reaction is 4 porphobilinogen + H2O = hydroxymethylbilane + 4 NH4(+). It participates in porphyrin-containing compound metabolism; protoporphyrin-IX biosynthesis; coproporphyrinogen-III from 5-aminolevulinate: step 2/4. Functionally, tetrapolymerization of the monopyrrole PBG into the hydroxymethylbilane pre-uroporphyrinogen in several discrete steps. The sequence is that of Porphobilinogen deaminase from Francisella tularensis subsp. tularensis (strain WY96-3418).